The following is a 181-amino-acid chain: Cytochrome c-type biogenesis protein CcmE (181 aa).

The Cytoplasmic portion of the chain corresponds to 1-8 (MNPRRKSR). A helical; Signal-anchor for type II membrane protein transmembrane segment spans residues 9–29 (LKVVVLIMFSVAVAAGLTLYA). At 30 to 181 (LSQNIDLFYT…TFNTLQGESK (152 aa)) the chain is on the periplasmic side. 2 residues coordinate heme: histidine 131 and tyrosine 135.

It belongs to the CcmE/CycJ family.

The protein localises to the cell inner membrane. Its function is as follows. Heme chaperone required for the biogenesis of c-type cytochromes. Transiently binds heme delivered by CcmC and transfers the heme to apo-cytochromes in a process facilitated by CcmF and CcmH. The chain is Cytochrome c-type biogenesis protein CcmE from Haemophilus ducreyi (strain 35000HP / ATCC 700724).